The chain runs to 195 residues: MKTALLSLILFSCHIWAVKHQAKKCTEDRECEEIWPGSTCQRARCRCPENYVRRKSPSREWVCLSVNDAATGQVGPPLTCPLPDGAGYQVILRGSSTNNLLSPPVLCSSKTNDCETGYECIQGLSPVDGLDGACCPDQITTCAHPIFDHESGTLERWGFDGSECVKFKWDPEKPSSANNFKTKLQCESYCVNIFA.

The signal sequence occupies residues M1 to A17. The 71-residue stretch at C120–C190 folds into the BPTI/Kunitz inhibitor domain. 2 disulfides stabilise this stretch: C120–C190 and C164–C186.

Its function is as follows. Appears to lack serine protease inhibitor activity in vitro when tested with bovine pancreatic alpha-chymotrypsin and elastase. May be involved in cuticle biosynthesis. The chain is Kunitz-type protein bli-5 from Haemonchus contortus (Barber pole worm).